Here is a 138-residue protein sequence, read N- to C-terminus: ATP synthase epsilon chain (138 aa).

It belongs to the ATPase epsilon chain family. In terms of assembly, F-type ATPases have 2 components, CF(1) - the catalytic core - and CF(0) - the membrane proton channel. CF(1) has five subunits: alpha(3), beta(3), gamma(1), delta(1), epsilon(1). CF(0) has three main subunits: a, b and c.

The protein resides in the cell inner membrane. Its function is as follows. Produces ATP from ADP in the presence of a proton gradient across the membrane. The sequence is that of ATP synthase epsilon chain from Ruthia magnifica subsp. Calyptogena magnifica.